The chain runs to 131 residues: Cuticle protein 79, isoform A (131 aa).

Repeat copies occupy residues 37–40, 45–48, and 53–56.

Functionally, component of the cuticle of migratory locust which contains more than 100 different structural proteins. The polypeptide is Cuticle protein 79, isoform A (Locusta migratoria (Migratory locust)).